An 886-amino-acid chain; its full sequence is Isoleucine--tRNA ligase (886 aa).

The short motif at 60–70 (PYANGDIHIGH) is the 'HIGH' region element. Glutamate 546 contacts L-isoleucyl-5'-AMP. Residues 587–591 (KMSKS) carry the 'KMSKS' region motif. Lysine 590 provides a ligand contact to ATP. Zn(2+) is bound by residues cysteine 856, cysteine 859, cysteine 870, and cysteine 873.

Belongs to the class-I aminoacyl-tRNA synthetase family. IleS type 1 subfamily. As to quaternary structure, monomer. Zn(2+) is required as a cofactor.

The protein resides in the cytoplasm. The catalysed reaction is tRNA(Ile) + L-isoleucine + ATP = L-isoleucyl-tRNA(Ile) + AMP + diphosphate. Functionally, catalyzes the attachment of isoleucine to tRNA(Ile). As IleRS can inadvertently accommodate and process structurally similar amino acids such as valine, to avoid such errors it has two additional distinct tRNA(Ile)-dependent editing activities. One activity is designated as 'pretransfer' editing and involves the hydrolysis of activated Val-AMP. The other activity is designated 'posttransfer' editing and involves deacylation of mischarged Val-tRNA(Ile). This Mesomycoplasma hyopneumoniae (strain 232) (Mycoplasma hyopneumoniae) protein is Isoleucine--tRNA ligase.